The following is a 130-amino-acid chain: Protein ApaG (130 aa).

In terms of domain architecture, ApaG spans R3–R127.

This Mesorhizobium japonicum (strain LMG 29417 / CECT 9101 / MAFF 303099) (Mesorhizobium loti (strain MAFF 303099)) protein is Protein ApaG.